We begin with the raw amino-acid sequence, 380 residues long: Dynactin subunit 2 (380 aa).

Positions 1-40 are disordered; it reads MADPKFQNLPGIAYDQPDVYETPDDPETDTSDYYEEEPEN. Residues 21–40 show a composition bias toward acidic residues; sequence ETPDDPETDTSDYYEEEPEN. 2 coiled-coil regions span residues 100–135 and 353–377; these read VQKC…QSYD and ETFA…TAIS.

It belongs to the dynactin subunit 2 family. Subunit of dynactin, a multiprotein complex associated with dynein.

Its subcellular location is the cytoplasm. It localises to the cytoskeleton. The protein localises to the membrane. In terms of biological role, modulates cytoplasmic dynein binding to an organelle, and plays a role in prometaphase chromosome alignment and spindle organization during mitosis. May play a role in synapse formation during brain development. The sequence is that of Dynactin subunit 2 from Drosophila pseudoobscura pseudoobscura (Fruit fly).